The sequence spans 147 residues: Hemoglobin subunit beta-2 (147 aa).

Positions 3–147 constitute a Globin domain; sequence EWTDSERAII…VVSALGRQYH (145 aa). Heme b is bound by residues His-64 and His-93.

This sequence belongs to the globin family. As to quaternary structure, hb 3 is a heterotetramer of two alpha-2 and two beta-2 chains. In terms of tissue distribution, red blood cells.

In terms of biological role, involved in oxygen transport from gills to the various peripheral tissues. The sequence is that of Hemoglobin subunit beta-2 (hbb2) from Boreogadus saida (Polar cod).